The chain runs to 257 residues: UPF0246 protein Shew185_1115 (257 aa).

This sequence belongs to the UPF0246 family.

This is UPF0246 protein Shew185_1115 from Shewanella baltica (strain OS185).